The sequence spans 188 residues: Peptidyl-tRNA hydrolase (188 aa).

A tRNA-binding site is contributed by Tyr-14. His-19 (proton acceptor) is an active-site residue. 3 residues coordinate tRNA: Tyr-64, Asn-66, and Asn-112.

Belongs to the PTH family. Monomer.

It localises to the cytoplasm. It carries out the reaction an N-acyl-L-alpha-aminoacyl-tRNA + H2O = an N-acyl-L-amino acid + a tRNA + H(+). Hydrolyzes ribosome-free peptidyl-tRNAs (with 1 or more amino acids incorporated), which drop off the ribosome during protein synthesis, or as a result of ribosome stalling. In terms of biological role, catalyzes the release of premature peptidyl moieties from peptidyl-tRNA molecules trapped in stalled 50S ribosomal subunits, and thus maintains levels of free tRNAs and 50S ribosomes. The sequence is that of Peptidyl-tRNA hydrolase from Clostridium perfringens (strain ATCC 13124 / DSM 756 / JCM 1290 / NCIMB 6125 / NCTC 8237 / Type A).